Reading from the N-terminus, the 449-residue chain is Exodeoxyribonuclease 7 large subunit (449 aa).

This sequence belongs to the XseA family. Heterooligomer composed of large and small subunits.

The protein localises to the cytoplasm. The enzyme catalyses Exonucleolytic cleavage in either 5'- to 3'- or 3'- to 5'-direction to yield nucleoside 5'-phosphates.. In terms of biological role, bidirectionally degrades single-stranded DNA into large acid-insoluble oligonucleotides, which are then degraded further into small acid-soluble oligonucleotides. The sequence is that of Exodeoxyribonuclease 7 large subunit from Salmonella typhimurium (strain LT2 / SGSC1412 / ATCC 700720).